A 221-amino-acid chain; its full sequence is Serine protease inhibitor 7 (221 aa).

Positions 1 to 22 (MKCLFLLCLCLVPIVVFSSTFT) are cleaved as a signal peptide. Residues 23–28 (SKNPIN) constitute a propeptide that is removed on maturation. The Vacuolar targeting signal motif lies at 25-30 (NPINLP). 2 disulfides stabilise this stretch: C76/C125 and C174/C191.

It belongs to the protease inhibitor I3 (leguminous Kunitz-type inhibitor) family. As to expression, tubers. Not detected in root, stem, leaves or flower bud.

Its subcellular location is the vacuole. Functionally, inhibitor of trypsin (serine protease). May protect the plant by inhibiting proteases of invading organisms. The polypeptide is Serine protease inhibitor 7 (Solanum tuberosum (Potato)).